Here is a 370-residue protein sequence, read N- to C-terminus: Serine O-succinyltransferase (370 aa).

Residues 46–355 (AILIVTGLSP…PQGHDAFLVD (310 aa)) form the AB hydrolase-1 domain. Positions 52-55 (GLSP) are important for substrate specificity. Serine 149 serves as the catalytic Nucleophile. Arginine 218 serves as a coordination point for substrate. Active-site residues include aspartate 316 and histidine 349. Aspartate 350 provides a ligand contact to substrate.

Belongs to the AB hydrolase superfamily. MetX family. In terms of assembly, homodimer.

The protein resides in the cytoplasm. The catalysed reaction is succinyl-CoA + L-serine = O-succinyl-L-serine + CoA. It catalyses the reaction L-homoserine + succinyl-CoA = O-succinyl-L-homoserine + CoA. It functions in the pathway amino-acid biosynthesis; L-cysteine biosynthesis; L-cysteine from L-serine: step 1/2. Its function is as follows. Transfers a succinyl group from succinyl-CoA to L-serine, forming succinyl-L-serine. In vitro, also has homoserine succinyl transferase activity. This chain is Serine O-succinyltransferase, found in Stenotrophomonas maltophilia (Pseudomonas maltophilia).